The sequence spans 286 residues: ATP synthase gamma chain (286 aa).

It belongs to the ATPase gamma chain family. As to quaternary structure, F-type ATPases have 2 components, CF(1) - the catalytic core - and CF(0) - the membrane proton channel. CF(1) has five subunits: alpha(3), beta(3), gamma(1), delta(1), epsilon(1). CF(0) has three main subunits: a, b and c.

Its subcellular location is the cell inner membrane. In terms of biological role, produces ATP from ADP in the presence of a proton gradient across the membrane. The gamma chain is believed to be important in regulating ATPase activity and the flow of protons through the CF(0) complex. The sequence is that of ATP synthase gamma chain from Leptospira borgpetersenii serovar Hardjo-bovis (strain JB197).